Reading from the N-terminus, the 492-residue chain is MRVSEPSDVVIRSDDTCHIHLTWSGSECDKYPAKQHARKVAMKLGVSSGLIYLVGQPTVNWGDSDQPQPFRQRRYFYYLSGIDEPDCYLTYDIQADLLTLYVPDFDLRRAVWMGPTLTIEEAHKQSDVDRVNFFAALQHDLEWWTTKNKGTRPIYVLHDSQQPLIPSKRLWLDNERLLPAMNAARVIKDEYELRMIRQANYISGLAHRKILEDIHRMSTEAEIESSFLATCVSHGAKNQSYAIIAGSGENAAVLHYVKNNEPLDGRQLVCLDAGAEWRCYASDVTRTIPLWTDWPSERARNIYRVVEEMQEECIRRIRKGVRFRDLQLLAHDIAIKGLQKLDILTNDCTSAIYESGASAVFFPHGLGHHVGLEVHDVSKRPITALDGNQANWGNHNFVPLLTDSSWSVPLLDEGMVVTIEPGIYFNRLALLNAQNQPLAKYINFDEAEKYIPIGGVRIEDDILVTAKGYENLTTAPKGEEMLEIIRRGIDNS.

Positions 272, 283, 420, and 459 each coordinate Mn(2+).

It belongs to the peptidase M24B family. Mn(2+) is required as a cofactor.

It carries out the reaction Release of any N-terminal amino acid, including proline, that is linked to proline, even from a dipeptide or tripeptide.. In terms of biological role, catalyzes the removal of a penultimate prolyl residue from the N-termini of peptides. The protein is Probable Xaa-Pro aminopeptidase AO090005001240 of Aspergillus oryzae (strain ATCC 42149 / RIB 40) (Yellow koji mold).